We begin with the raw amino-acid sequence, 339 residues long: Dihydroorotate dehydrogenase (quinone) (339 aa).

FMN is bound by residues 62 to 66 (AGMDK) and threonine 86. Residue lysine 66 coordinates substrate. 111–115 (NRMGF) provides a ligand contact to substrate. Residues asparagine 139 and asparagine 172 each contribute to the FMN site. A substrate-binding site is contributed by asparagine 172. Serine 175 acts as the Nucleophile in catalysis. A substrate-binding site is contributed by asparagine 177. Residues lysine 217 and threonine 245 each coordinate FMN. Position 246–247 (246–247 (NT)) interacts with substrate. Residues glycine 268, glycine 297, and 318-319 (YS) each bind FMN.

This sequence belongs to the dihydroorotate dehydrogenase family. Type 2 subfamily. Monomer. It depends on FMN as a cofactor.

The protein localises to the cell membrane. It carries out the reaction (S)-dihydroorotate + a quinone = orotate + a quinol. It functions in the pathway pyrimidine metabolism; UMP biosynthesis via de novo pathway; orotate from (S)-dihydroorotate (quinone route): step 1/1. Its function is as follows. Catalyzes the conversion of dihydroorotate to orotate with quinone as electron acceptor. The protein is Dihydroorotate dehydrogenase (quinone) of Shewanella oneidensis (strain ATCC 700550 / JCM 31522 / CIP 106686 / LMG 19005 / NCIMB 14063 / MR-1).